The chain runs to 179 residues: Large ribosomal subunit protein uL5 (179 aa).

It belongs to the universal ribosomal protein uL5 family. As to quaternary structure, part of the 50S ribosomal subunit; part of the 5S rRNA/L5/L18/L25 subcomplex. Contacts the 5S rRNA and the P site tRNA. Forms a bridge to the 30S subunit in the 70S ribosome.

Its function is as follows. This is one of the proteins that bind and probably mediate the attachment of the 5S RNA into the large ribosomal subunit, where it forms part of the central protuberance. In the 70S ribosome it contacts protein S13 of the 30S subunit (bridge B1b), connecting the 2 subunits; this bridge is implicated in subunit movement. Contacts the P site tRNA; the 5S rRNA and some of its associated proteins might help stabilize positioning of ribosome-bound tRNAs. The chain is Large ribosomal subunit protein uL5 from Syntrophus aciditrophicus (strain SB).